Consider the following 947-residue polypeptide: Receptor-like protein 56 (947 aa).

The first 27 residues, 1 to 27 (MEGKVFSGQKLILVMLLLGHLHGFSSC), serve as a signal peptide directing secretion. Residues 28 to 899 (IEKERKALLE…EDDKEVAIDM (872 aa)) are Extracellular-facing. 3 N-linked (GlcNAc...) asparagine glycosylation sites follow: asparagine 60, asparagine 75, and asparagine 98. LRR repeat units follow at residues 105 to 128 (FEEV…VEGY), 134 to 157 (LRNL…FLNA), 159 to 182 (TSLT…ELKN), 183 to 207 (LTNL…EFPY), 209 to 232 (KKLK…GLKN), 233 to 257 (LTNL…VFCE), 259 to 281 (KNLQ…CFGN), 282 to 305 (LNKL…SFSS), and 307 to 330 (ESLE…PLTN). 3 N-linked (GlcNAc...) asparagine glycosylation sites follow: asparagine 141, asparagine 148, and asparagine 182. An N-linked (GlcNAc...) asparagine glycan is attached at asparagine 232. Asparagine 330 carries an N-linked (GlcNAc...) asparagine glycan. An LRR 10; degenerate repeat occupies 332–356 (TKLKVFIFSSKDDMVQVKIESTWQP). 18 LRR repeats span residues 357-380 (LFQL…LMYQ), 381-404 (KNLH…LLEN), 405-427 (NPEL…PTSV), 428-450 (HNLQ…NFGR), 452-476 (LPNL…MGEM), 477-500 (YNIS…FVSS), 502-527 (FSLS…NFTS), 529-549 (IVLR…LLTL), 550-575 (VDLC…VFEY), 577-598 (NFLD…SLDN), 600-616 (LFLH…DTFL), 617-640 (GSIQ…VDTQ), 642-663 (ISFL…LCEF), 664-686 (SKMR…CFNN), 757-780 (LNSM…ELGD), 781-804 (LFKL…SFSK), 805-829 (LQDI…LTNL), and 831-854 (SLAI…QFNT). Residue asparagine 415 is glycosylated (N-linked (GlcNAc...) asparagine). 4 N-linked (GlcNAc...) asparagine glycosylation sites follow: asparagine 459, asparagine 478, asparagine 488, and asparagine 524. Residue asparagine 606 is glycosylated (N-linked (GlcNAc...) asparagine). An N-linked (GlcNAc...) asparagine glycan is attached at asparagine 686. 4 N-linked (GlcNAc...) asparagine glycosylation sites follow: asparagine 788, asparagine 828, asparagine 836, and asparagine 841. The chain crosses the membrane as a helical span at residues 900-920 (LVFYWSTAGTYVTALIGILVL). Residues 921–947 (MCVDCSWRRAWLRLVDAFIASAKSKLA) lie on the Cytoplasmic side of the membrane.

It belongs to the RLP family.

Its subcellular location is the cell membrane. The protein is Receptor-like protein 56 of Arabidopsis thaliana (Mouse-ear cress).